The chain runs to 198 residues: Transcription factor FapR (198 aa).

Positions 102–169 (NRIARGHHLF…RTIVEVNSYV (68 aa)) constitute a MaoC-like domain.

This sequence belongs to the FapR family.

In terms of biological role, transcriptional factor involved in regulation of membrane lipid biosynthesis by repressing genes involved in fatty acid and phospholipid metabolism. The sequence is that of Transcription factor FapR from Geobacillus sp. (strain WCH70).